The following is a 194-amino-acid chain: Adenylate kinase (194 aa).

Residue 10-15 (GAGKGT) coordinates ATP. An NMP region spans residues 30-59 (STGDMLRAAVKAETEIGKKAKAVMDAGELV). AMP is bound by residues threonine 31, arginine 36, 57-59 (ELV), 85-88 (GYPR), and glutamine 92. The segment at 126-142 (KRAEDAQAAGQPVRRDD) is LID. Arginine 127 contacts ATP. Residues arginine 139 and arginine 150 each contribute to the AMP site. Alanine 178 contacts ATP.

It belongs to the adenylate kinase family. In terms of assembly, monomer.

The protein localises to the cytoplasm. It catalyses the reaction AMP + ATP = 2 ADP. It functions in the pathway purine metabolism; AMP biosynthesis via salvage pathway; AMP from ADP: step 1/1. Catalyzes the reversible transfer of the terminal phosphate group between ATP and AMP. Plays an important role in cellular energy homeostasis and in adenine nucleotide metabolism. The chain is Adenylate kinase from Chelativorans sp. (strain BNC1).